A 136-amino-acid chain; its full sequence is NADPH-dependent 7-cyano-7-deazaguanine reductase (136 aa).

Cysteine 50 acts as the Thioimide intermediate in catalysis. Catalysis depends on aspartate 57, which acts as the Proton donor. Substrate contacts are provided by residues 72–74 and 91–92; these read YEL and HE.

Belongs to the GTP cyclohydrolase I family. QueF type 1 subfamily.

It localises to the cytoplasm. The catalysed reaction is 7-aminomethyl-7-carbaguanine + 2 NADP(+) = 7-cyano-7-deazaguanine + 2 NADPH + 3 H(+). It functions in the pathway tRNA modification; tRNA-queuosine biosynthesis. Its function is as follows. Catalyzes the NADPH-dependent reduction of 7-cyano-7-deazaguanine (preQ0) to 7-aminomethyl-7-deazaguanine (preQ1). This Prochlorococcus marinus (strain MIT 9515) protein is NADPH-dependent 7-cyano-7-deazaguanine reductase.